A 1405-amino-acid chain; its full sequence is Protein crumbs homolog 1 (1405 aa).

The first 27 residues, 1 to 27, serve as a signal peptide directing secretion; that stretch reads MKLKRTAYLLFLYLSSSLLICIKNSFC. Topologically, residues 28–1339 are extracellular; that stretch reads NKNNTRCLSG…RCELDLADDR (1312 aa). Positions 30–67 constitute an EGF-like 1; atypical domain; the sequence is NNTRCLSGPCQNNSTCKHFPQDNNCCLDTANNLDKDCE. 33 disulfide bridges follow: cysteine 34–cysteine 45, cysteine 39–cysteine 54, cysteine 55–cysteine 66, cysteine 73–cysteine 84, cysteine 78–cysteine 95, cysteine 97–cysteine 106, cysteine 113–cysteine 124, cysteine 118–cysteine 133, cysteine 135–cysteine 144, cysteine 151–cysteine 162, cysteine 156–cysteine 171, cysteine 173–cysteine 182, cysteine 189–cysteine 200, cysteine 194–cysteine 209, cysteine 211–cysteine 220, cysteine 227–cysteine 238, cysteine 232–cysteine 247, cysteine 249–cysteine 258, cysteine 265–cysteine 276, cysteine 270–cysteine 285, cysteine 287–cysteine 297, cysteine 304–cysteine 315, cysteine 309–cysteine 324, cysteine 326–cysteine 335, cysteine 342–cysteine 353, cysteine 347–cysteine 382, cysteine 384–cysteine 393, cysteine 400–cysteine 411, cysteine 405–cysteine 420, cysteine 422–cysteine 437, cysteine 444–cysteine 455, cysteine 449–cysteine 468, and cysteine 470–cysteine 479. The N-linked (GlcNAc...) asparagine glycan is linked to asparagine 41. 2 EGF-like domains span residues 69–107 and 109–145; these read LKDPCFSSPCQGIATCVKIPGEGNFLCQCPPGYSGLNCE and ATNSCGGNLCQHGGTCRKDPEHPVCICPPGYAGRFCE. In terms of domain architecture, EGF-like 4; calcium-binding spans 147 to 183; sequence DHNECASSPCHNGAMCQDGINGYSCFCVPGYQGRHCD. The region spanning 185 to 221 is the EGF-like 5; calcium-binding domain; sequence EVDECVSDPCKNEAVCLNEIGRYTCVCPQEFSGVNCE. In terms of domain architecture, EGF-like 6; calcium-binding spans 223–259; it reads EIDECRSQPCLHGATCQDAPGGYSCDCAPGFLGEHCE. EGF-like domains are found at residues 261 to 298, 300 to 336, 338 to 394, 396 to 438, and 440 to 480; these read SVNECESQPCLHGGLCVDGRNSYHCDCTGSGFTGMHCE, LIPLCWSKPCHNDATCEDTVDSYICHCRPGYTGALCE, DINE…IHCE, DVDE…ENCS, and ILLG…PLCE. A Laminin G-like 1 domain is found at 482-669; the sequence is VTTLSFGSNG…GLSSNVKAGC (188 aa). N-linked (GlcNAc...) asparagine glycosylation is found at asparagine 560 and asparagine 656. Disulfide bonds link cysteine 641–cysteine 669, cysteine 675–cysteine 686, cysteine 680–cysteine 695, and cysteine 697–cysteine 706. Positions 671–707 constitute an EGF-like 12 domain; sequence GKDWCESQPCQNRGRCINLWQGYQCECDRPYTGSNCL. A Laminin G-like 2 domain is found at 713–884; sequence GRFGQDDSTG…PILVNVTQGC (172 aa). Asparagine 756 and asparagine 879 each carry an N-linked (GlcNAc...) asparagine glycan. 6 disulfides stabilise this stretch: cysteine 850–cysteine 884, cysteine 890–cysteine 901, cysteine 895–cysteine 910, cysteine 912–cysteine 921, cysteine 927–cysteine 938, and cysteine 932–cysteine 947. EGF-like domains follow at residues 886–922 and 923–959; these read GDNTCKSNPCHNGGVCHSLWDDFSCSCPTNTAGRACE and QVQWCQLSPCPPTAECQLLPQGFECIANAVFSGLSRE. One can recognise a Laminin G-like 3 domain in the interval 950–1136; it reads NAVFSGLSRE…VSTNMVLTGC (187 aa). N-linked (GlcNAc...) asparagine glycans are attached at residues asparagine 967, asparagine 974, and asparagine 999. 16 disulfide bridges follow: cysteine 1095/cysteine 1136, cysteine 1142/cysteine 1153, cysteine 1147/cysteine 1162, cysteine 1164/cysteine 1173, cysteine 1180/cysteine 1190, cysteine 1185/cysteine 1199, cysteine 1201/cysteine 1210, cysteine 1217/cysteine 1228, cysteine 1222/cysteine 1237, cysteine 1239/cysteine 1248, cysteine 1258/cysteine 1273, cysteine 1267/cysteine 1282, cysteine 1284/cysteine 1293, cysteine 1300/cysteine 1311, cysteine 1305/cysteine 1320, and cysteine 1322/cysteine 1331. The EGF-like 15 domain maps to 1138-1174; it reads PSNACHSSPCLHGGNCEDSYSSYRCACLSGWSGTHCE. Residues 1176–1211 enclose the EGF-like 16; calcium-binding domain; the sequence is NIDECFSSPCIHGNCSDGVAAYHCRCEPGYTGVNCE. The N-linked (GlcNAc...) asparagine glycan is linked to asparagine 1189. 2 consecutive EGF-like domains span residues 1213–1249 and 1254–1294; these read DVDNCKSHQCANGATCVPEAHGYSCLCFGNFTGRFCR and PSTV…EWCE. N-linked (GlcNAc...) asparagine glycosylation is found at asparagine 1242 and asparagine 1264. Residues 1296 to 1332 form the EGF-like 19; calcium-binding domain; sequence DINECASDPCINGGLCRDLVNRFLCICDVAFAGERCE. A helical transmembrane segment spans residues 1340–1360; it reads LLGIFTAVGSGTLALFFILLL. Residues 1361-1405 are Cytoplasmic-facing; that stretch reads AGVASLIASNKRATQGTYSPSGQEKAGPRVEMWIRMPPPALERLI.

It belongs to the Crumbs protein family. In terms of assembly, component of a complex composed of PALS1, CRB1 and EPB41L5. Within the complex, interacts (via intracellular domain) with PALS1 and EPB41L5 (via FERM domain). Forms a complex with MPP4 and PALS1. Interacts with MPDZ/MUPP1 and MPP4. Post-translationally, glycosylated. Expressed in the kidney, lung, stomach and testis. Expressed in the brain. Expressed in the retina of the eye. Expressed in the outer nuclear layer, photoreceptor layer and inner nuclear layer of the retina. Expressed in Mueller cell radial processes in the inner nuclear layer, in apical processes sclerad to the external limiting membrane, and in the subapical region, adjacent to the adherens junction of retinal photoreceptors. In the brain, expressed in the granular layer of the cerebellum, the hippocampal dentate gyrus, the olfactory bulbs, the subventricular region lining the telencephalic ventricles and the rostral migratory stream. As to expression, ubiquitously expressed.

The protein localises to the apical cell membrane. The protein resides in the secreted. Its subcellular location is the cell projection. It is found in the cilium. It localises to the photoreceptor outer segment. The protein localises to the photoreceptor inner segment. The protein resides in the cytoplasm. Its subcellular location is the cell junction. It is found in the focal adhesion. Plays a role in photoreceptor morphogenesis in the retina. May maintain cell polarization and adhesion. In terms of biological role, may play a role in epidermal tissue morphogenesis. May function in cell attachment for stratified epithelial organization. The protein is Protein crumbs homolog 1 (Crb1) of Mus musculus (Mouse).